The sequence spans 1038 residues: Zinc finger protein 628 (1038 aa).

A disordered region spans residues 1-31; sequence MAGSHVDMAPASTTEGTGEKPGPTAPAPTPA. Positions 13 to 22 are enriched in low complexity; that stretch reads TTEGTGEKPG. C2H2-type zinc fingers lie at residues 34–56, 62–84, 90–112, 118–140, 146–168, and 174–196; these read YECG…QRTH, YKCP…QRGH, YQCP…RSVH, FTCG…LRQH, YPCP…RHVH, and YTCG…QRVH. At Thr197 the chain carries Phosphothreonine. The C2H2-type 7 zinc-finger motif lies at 202 to 224; it reads FRCPLCPKTFTHSSNLLLHHRTH. Disordered stretches follow at residues 220–242 and 254–273; these read HHRT…ETSR and LQPR…PPVV. Composition is skewed to pro residues over residues 227–237 and 257–273; these read APGPAPAPAPP and RSPP…PPVV. 7 C2H2-type zinc fingers span residues 346-368, 376-398, 446-468, 474-496, 502-524, 530-552, and 558-580; these read FACL…QHSH, FRCG…QQCH, YKCA…LRDH, YQCG…QRVH, FTCG…LRLH, YACT…RHVH, and HSCS…QRVH. The residue at position 581 (Thr581) is a Phosphothreonine. 2 consecutive C2H2-type zinc fingers follow at residues 586 to 608 and 614 to 636; these read FRCP…QRTH and FACP…LRTH. 2 disordered regions span residues 637-661 and 717-763; these read TPAT…LAAA and PSSV…AGQG. Over residues 723-733 the composition is skewed to pro residues; sequence PTPPPPPPPPK. Positions 734–756 are enriched in low complexity; the sequence is VILLPPASAGGPGSGAARPGPRS. 4 consecutive repeat copies span residues 811–821, 822–832, 833–843, and 844–854. The 4 X 11 AA tandem repeats of VQLQP-[AL]-[QT]-[EG]-[VQ]-[ATV]-[ST] stretch occupies residues 811-854; sequence VQLQPAQEVATVQLQPAQEVTTVQLQPAQEVTTVQLQPLTGQVS. Residues 922 to 1038 are interaction with TAF4B; sequence DGEQTRLCVQ…LPAVQLVHTF (117 aa).

In terms of assembly, interacts with TAF4B. Expressed widely in testis, in both germline and somatic cells. Seems to have particularly strong expression in meiotic spermatocytes, postmeiotic round spermatids and Sertoli cells. Not detected in elongating spermatids or mature sperm (at protein level). Expressed in testis, ovary, spleen, lung, brain, liver and kidney. Expressed in D3 embryonic stem cells and F9 embryonal carcinoma cells.

The protein resides in the nucleus. Functionally, transcriptional activator. Binds DNA on GT-box consensus sequence 5'-TTGGTT-3'. Plays a role in spermiogenesis. This is Zinc finger protein 628 from Mus musculus (Mouse).